The primary structure comprises 169 residues: Cell division inhibitor SulA (169 aa).

Residues 106–112 (ALRTGNY) are ftsZ binding. Positions 162–169 (KIHSNLYH) are lon protease binding.

The protein belongs to the SulA family. Interacts with FtsZ. In terms of processing, is rapidly cleaved and degraded by the Lon protease once DNA damage is repaired.

In terms of biological role, component of the SOS system and an inhibitor of cell division. Accumulation of SulA causes rapid cessation of cell division and the appearance of long, non-septate filaments. In the presence of GTP, binds a polymerization-competent form of FtsZ in a 1:1 ratio, thus inhibiting FtsZ polymerization and therefore preventing it from participating in the assembly of the Z ring. This mechanism prevents the premature segregation of damaged DNA to daughter cells during cell division. The polypeptide is Cell division inhibitor SulA (Escherichia coli O45:K1 (strain S88 / ExPEC)).